The following is a 794-amino-acid chain: Zinc finger protein 148 (794 aa).

Residue Lys6 forms a Glycyl lysine isopeptide (Lys-Gly) (interchain with G-Cter in SUMO2) linkage. Ser51 is subject to Phosphoserine. Residues Lys88, Lys115, and Lys132 each participate in a glycyl lysine isopeptide (Lys-Gly) (interchain with G-Cter in SUMO2) cross-link. A C2H2-type 1 zinc finger spans residues 171–193 (HVCEHCNAAFRTNYHLQRHVFIH). Thr194 carries the post-translational modification Phosphothreonine. C2H2-type zinc fingers lie at residues 199-221 (FQCSQCDMRFIQKYLLQRHEKIH) and 227-249 (FRCDECGMRFIQKYHMERHKRTH). Position 250 is a phosphoserine (Ser250). The C2H2-type 4 zinc-finger motif lies at 255–278 (YQCEYCLQYFSRTDRVLKHKRMCH). A Glycyl lysine isopeptide (Lys-Gly) (interchain with G-Cter in SUMO2) cross-link involves residue Lys291. The interval 298-336 (EEDSGFSTSPKDNSLPKKKRQKTEKKSSGMDKESVLDKS) is disordered. A phosphoserine mark is found at Ser301 and Ser306. A Glycyl lysine isopeptide (Lys-Gly) (interchain with G-Cter in SUMO2) cross-link involves residue Lys308. Residues 321-336 (EKKSSGMDKESVLDKS) are compositionally biased toward basic and acidic residues. Lys356 participates in a covalent cross-link: Glycyl lysine isopeptide (Lys-Gly) (interchain with G-Cter in SUMO1); alternate. Residue Lys356 forms a Glycyl lysine isopeptide (Lys-Gly) (interchain with G-Cter in SUMO2); alternate linkage. Residue Lys402 forms a Glycyl lysine isopeptide (Lys-Gly) (interchain with G-Cter in SUMO2) linkage. Residue Ser412 is modified to Phosphoserine. Glycyl lysine isopeptide (Lys-Gly) (interchain with G-Cter in SUMO2) cross-links involve residues Lys421 and Lys424. The span at 574–588 (NSSDVPEVTQSENVG) shows a compositional bias: polar residues. The disordered stretch occupies residues 574–599 (NSSDVPEVTQSENVGSSSQASSSDKA). Lys607 carries the post-translational modification N6-acetyllysine. A phosphoserine mark is found at Ser665 and Ser784.

Belongs to the krueppel C2H2-type zinc-finger protein family. In terms of assembly, interacts with HNRNPDL. Interacts with the 5FMC complex; the interaction requires association with CHTOP. Interacts with CAVIN1. Sumoylated with SUMO2. Desumoylated by SENP3, resulting in the stimulation of transcription of its target genes. In terms of tissue distribution, strong expression detected in brain, lung, liver and kidney, with lower levels detected in spleen, skeletal muscle, testis and heart.

Its subcellular location is the nucleus. In terms of biological role, involved in transcriptional regulation. Represses the transcription of a number of genes including gastrin, stromelysin and enolase. Binds to the G-rich box in the enhancer region of these genes. The chain is Zinc finger protein 148 (Znf148) from Mus musculus (Mouse).